The chain runs to 199 residues: Cytosine-containing mismatch-binding protein 1 (199 aa).

A DNA-binding region (HMG box) is located at residues 123–197 (PKKPSSAFIL…QYDKFMKEAG (75 aa)).

In terms of assembly, monomer.

It is found in the nucleus. Binds to cytosines in base mismatches and opposite chemically altered guanines. May be involved in repair of DNA damage. This is Cytosine-containing mismatch-binding protein 1 from Schizosaccharomyces pombe (strain 972 / ATCC 24843) (Fission yeast).